The primary structure comprises 264 residues: NAD-capped RNA hydrolase NudC (264 aa).

Cys-99 and Cys-102 together coordinate Zn(2+). Residue Glu-112 participates in substrate binding. Cys-117 and Cys-120 together coordinate Zn(2+). Residue Tyr-125 participates in substrate binding. The Nudix hydrolase domain maps to Pro-126–Thr-253. Residues Ala-162, Glu-178, and Glu-182 each contribute to the a divalent metal cation site. The Nudix box motif lies at Gly-163 to Gly-184. Gln-196 to Ser-203 is a binding site for substrate. Residue Glu-223 participates in a divalent metal cation binding. A substrate-binding site is contributed by Ala-246.

Belongs to the Nudix hydrolase family. NudC subfamily. As to quaternary structure, homodimer. Mg(2+) is required as a cofactor. Mn(2+) serves as cofactor. It depends on Zn(2+) as a cofactor.

The catalysed reaction is a 5'-end NAD(+)-phospho-ribonucleoside in mRNA + H2O = a 5'-end phospho-adenosine-phospho-ribonucleoside in mRNA + beta-nicotinamide D-ribonucleotide + 2 H(+). The enzyme catalyses NAD(+) + H2O = beta-nicotinamide D-ribonucleotide + AMP + 2 H(+). It carries out the reaction NADH + H2O = reduced beta-nicotinamide D-ribonucleotide + AMP + 2 H(+). MRNA decapping enzyme that specifically removes the nicotinamide adenine dinucleotide (NAD) cap from a subset of mRNAs by hydrolyzing the diphosphate linkage to produce nicotinamide mononucleotide (NMN) and 5' monophosphate mRNA. The NAD-cap is present at the 5'-end of some mRNAs and stabilizes RNA against 5'-processing. Has preference for mRNAs with a 5'-end purine. Catalyzes the hydrolysis of a broad range of dinucleotide pyrophosphates. The polypeptide is NAD-capped RNA hydrolase NudC (Haemophilus influenzae (strain ATCC 51907 / DSM 11121 / KW20 / Rd)).